Reading from the N-terminus, the 346-residue chain is Sensor histidine kinase GraS (346 aa).

Transmembrane regions (helical) follow at residues 15–35 (MNWIFWILFLNLLMLGISLID) and 43–63 (LFYIVSLNLSLTMIFLILTYF). Residues 126–332 (EFVHDIKTPV…TVRLIFPLQN (207 aa)) form the Histidine kinase domain.

In terms of assembly, interacts with GraX.

It is found in the cell membrane. It carries out the reaction ATP + protein L-histidine = ADP + protein N-phospho-L-histidine.. Member of the two-component regulatory system GraR/GraS involved in resistance against cationic antimicrobial peptides (CAMPs). Functions as a sensor protein kinase which phosphorylates GraR through the auxiliary protein GraX. In turn, GraR up-regulates many genes such as adhesins, exoproteins, transporters, toxins, and proteins involved in cell wall synthesis. Down-regulates the expression of many genes involved in RNA and amino acid synthesis or glycolysis. This is Sensor histidine kinase GraS (graS) from Staphylococcus aureus (strain Mu50 / ATCC 700699).